We begin with the raw amino-acid sequence, 206 residues long: Inner membrane-spanning protein YciB (206 aa).

Helical transmembrane passes span 50-70 (PILL…GYLL), 78-98 (GTLW…IYFH), 105-125 (WKPT…QIFL), 150-170 (LSWV…AFNF), and 173-193 (AAWV…FIII).

Belongs to the YciB family.

It localises to the cell inner membrane. Its function is as follows. Plays a role in cell envelope biogenesis, maintenance of cell envelope integrity and membrane homeostasis. In Herminiimonas arsenicoxydans, this protein is Inner membrane-spanning protein YciB.